Reading from the N-terminus, the 258-residue chain is Imidazole glycerol phosphate synthase subunit HisF (258 aa).

Active-site residues include aspartate 11 and aspartate 130.

It belongs to the HisA/HisF family. As to quaternary structure, heterodimer of HisH and HisF.

The protein resides in the cytoplasm. The catalysed reaction is 5-[(5-phospho-1-deoxy-D-ribulos-1-ylimino)methylamino]-1-(5-phospho-beta-D-ribosyl)imidazole-4-carboxamide + L-glutamine = D-erythro-1-(imidazol-4-yl)glycerol 3-phosphate + 5-amino-1-(5-phospho-beta-D-ribosyl)imidazole-4-carboxamide + L-glutamate + H(+). Its pathway is amino-acid biosynthesis; L-histidine biosynthesis; L-histidine from 5-phospho-alpha-D-ribose 1-diphosphate: step 5/9. IGPS catalyzes the conversion of PRFAR and glutamine to IGP, AICAR and glutamate. The HisF subunit catalyzes the cyclization activity that produces IGP and AICAR from PRFAR using the ammonia provided by the HisH subunit. The polypeptide is Imidazole glycerol phosphate synthase subunit HisF (Prochlorococcus marinus (strain MIT 9211)).